The chain runs to 290 residues: Pyridoxal kinase PdxY (290 aa).

Substrate-binding positions include Ser12 and 47-48 (TQ). Residues Asp114, Glu151, Lys184, and 211–214 (RPLL) contribute to the ATP site. Substrate is bound at residue Asp225.

Belongs to the pyridoxine kinase family. PdxY subfamily. Homodimer. Requires Mg(2+) as cofactor.

It carries out the reaction pyridoxal + ATP = pyridoxal 5'-phosphate + ADP + H(+). It participates in cofactor metabolism; pyridoxal 5'-phosphate salvage; pyridoxal 5'-phosphate from pyridoxal: step 1/1. Its function is as follows. Pyridoxal kinase involved in the salvage pathway of pyridoxal 5'-phosphate (PLP). Catalyzes the phosphorylation of pyridoxal to PLP. In Pseudomonas putida (strain ATCC 47054 / DSM 6125 / CFBP 8728 / NCIMB 11950 / KT2440), this protein is Pyridoxal kinase PdxY.